The chain runs to 233 residues: Large ribosomal subunit protein uL1 (233 aa).

Belongs to the universal ribosomal protein uL1 family. Part of the 50S ribosomal subunit.

Binds directly to 23S rRNA. The L1 stalk is quite mobile in the ribosome, and is involved in E site tRNA release. In terms of biological role, protein L1 is also a translational repressor protein, it controls the translation of the L11 operon by binding to its mRNA. The chain is Large ribosomal subunit protein uL1 from Shewanella baltica (strain OS185).